The following is a 249-amino-acid chain: ATP synthase subunit a, chloroplastic (249 aa).

5 helical membrane-spanning segments follow: residues Gln-40–Ile-60, Val-97–Leu-117, Ile-136–Ser-156, Leu-201–Leu-221, and Gly-222–Gly-242.

Belongs to the ATPase A chain family. In terms of assembly, F-type ATPases have 2 components, CF(1) - the catalytic core - and CF(0) - the membrane proton channel. CF(1) has five subunits: alpha(3), beta(3), gamma(1), delta(1), epsilon(1). CF(0) has four main subunits: a, b, b' and c.

It localises to the plastid. The protein localises to the chloroplast thylakoid membrane. Its function is as follows. Key component of the proton channel; it plays a direct role in the translocation of protons across the membrane. In Nasturtium officinale (Watercress), this protein is ATP synthase subunit a, chloroplastic.